The sequence spans 206 residues: Histidine biosynthesis bifunctional protein HisIE (206 aa).

The segment at 1 to 117 (MCNEPATSDV…SCFPAAPGQF (117 aa)) is phosphoribosyl-AMP cyclohydrolase. The phosphoribosyl-ATP pyrophosphohydrolase stretch occupies residues 118–206 (LGALDALVAE…AVTVLEARHR (89 aa)).

The protein in the N-terminal section; belongs to the PRA-CH family. In the C-terminal section; belongs to the PRA-PH family.

It is found in the cytoplasm. The catalysed reaction is 1-(5-phospho-beta-D-ribosyl)-ATP + H2O = 1-(5-phospho-beta-D-ribosyl)-5'-AMP + diphosphate + H(+). It carries out the reaction 1-(5-phospho-beta-D-ribosyl)-5'-AMP + H2O = 1-(5-phospho-beta-D-ribosyl)-5-[(5-phospho-beta-D-ribosylamino)methylideneamino]imidazole-4-carboxamide. It participates in amino-acid biosynthesis; L-histidine biosynthesis; L-histidine from 5-phospho-alpha-D-ribose 1-diphosphate: step 2/9. The protein operates within amino-acid biosynthesis; L-histidine biosynthesis; L-histidine from 5-phospho-alpha-D-ribose 1-diphosphate: step 3/9. This is Histidine biosynthesis bifunctional protein HisIE (hisI) from Xylella fastidiosa (strain 9a5c).